A 353-amino-acid chain; its full sequence is Photosystem II D2 protein (353 aa).

Threonine 2 is subject to N-acetylthreonine. Position 2 is a phosphothreonine (threonine 2). Residues 41–61 (CAYFALGGWFTGTTFVTSWYT) traverse the membrane as a helical segment. Histidine 118 provides a ligand contact to chlorophyll a. A helical transmembrane segment spans residues 125 to 141 (GFMLRQFELARSVQLRP). Glutamine 130 and asparagine 143 together coordinate pheophytin a. A helical membrane pass occupies residues 153–166 (VFVSVFLIYPLGQS). Chlorophyll a is bound at residue histidine 198. A helical transmembrane segment spans residues 208–228 (AALLCAIHGATVENTLFEDGD). Residues histidine 215 and phenylalanine 262 each coordinate a plastoquinone. Histidine 215 contributes to the Fe cation binding site. Histidine 269 provides a ligand contact to Fe cation. The helical transmembrane segment at 279 to 295 (GLWMSAIGVVGLALNLR) threads the bilayer.

It belongs to the reaction center PufL/M/PsbA/D family. As to quaternary structure, PSII is composed of 1 copy each of membrane proteins PsbA, PsbB, PsbC, PsbD, PsbE, PsbF, PsbH, PsbI, PsbJ, PsbK, PsbL, PsbM, PsbT, PsbX, PsbY, PsbZ, Psb30/Ycf12, at least 3 peripheral proteins of the oxygen-evolving complex and a large number of cofactors. It forms dimeric complexes. The D1/D2 heterodimer binds P680, chlorophylls that are the primary electron donor of PSII, and subsequent electron acceptors. It shares a non-heme iron and each subunit binds pheophytin, quinone, additional chlorophylls, carotenoids and lipids. There is also a Cl(-1) ion associated with D1 and D2, which is required for oxygen evolution. The PSII complex binds additional chlorophylls, carotenoids and specific lipids. is required as a cofactor.

The protein localises to the plastid. It is found in the chloroplast thylakoid membrane. It catalyses the reaction 2 a plastoquinone + 4 hnu + 2 H2O = 2 a plastoquinol + O2. In terms of biological role, photosystem II (PSII) is a light-driven water:plastoquinone oxidoreductase that uses light energy to abstract electrons from H(2)O, generating O(2) and a proton gradient subsequently used for ATP formation. It consists of a core antenna complex that captures photons, and an electron transfer chain that converts photonic excitation into a charge separation. The D1/D2 (PsbA/PsbD) reaction center heterodimer binds P680, the primary electron donor of PSII as well as several subsequent electron acceptors. D2 is needed for assembly of a stable PSII complex. The chain is Photosystem II D2 protein from Lolium perenne (Perennial ryegrass).